We begin with the raw amino-acid sequence, 567 residues long: Potassium-transporting ATPase potassium-binding subunit (567 aa).

12 helical membrane passes run 3-23 (MIGW…TKPL), 64-84 (LTYT…IYGV), 136-156 (GLTH…MALI), 179-199 (LYVL…QGIP), 220-240 (VGPV…GGFF), 254-274 (LSNF…TNVF), 285-305 (WAIL…TYWA), 330-350 (FGLV…CGAV), 374-394 (IIVG…VLAI), 420-440 (AMLA…VGVV), 488-508 (LASA…AIAG), and 527-547 (GGLF…LTFF).

It belongs to the KdpA family. The system is composed of three essential subunits: KdpA, KdpB and KdpC.

The protein resides in the cell inner membrane. Its function is as follows. Part of the high-affinity ATP-driven potassium transport (or Kdp) system, which catalyzes the hydrolysis of ATP coupled with the electrogenic transport of potassium into the cytoplasm. This subunit binds the periplasmic potassium ions and delivers the ions to the membrane domain of KdpB through an intramembrane tunnel. The protein is Potassium-transporting ATPase potassium-binding subunit of Bradyrhizobium diazoefficiens (strain JCM 10833 / BCRC 13528 / IAM 13628 / NBRC 14792 / USDA 110).